The primary structure comprises 249 residues: Sugar fermentation stimulation protein homolog (249 aa).

It belongs to the SfsA family.

This Prochlorococcus marinus (strain MIT 9515) protein is Sugar fermentation stimulation protein homolog.